The chain runs to 303 residues: Glycine--tRNA ligase alpha subunit (303 aa).

This sequence belongs to the class-II aminoacyl-tRNA synthetase family. In terms of assembly, tetramer of two alpha and two beta subunits.

It is found in the cytoplasm. The catalysed reaction is tRNA(Gly) + glycine + ATP = glycyl-tRNA(Gly) + AMP + diphosphate. The sequence is that of Glycine--tRNA ligase alpha subunit from Escherichia fergusonii (strain ATCC 35469 / DSM 13698 / CCUG 18766 / IAM 14443 / JCM 21226 / LMG 7866 / NBRC 102419 / NCTC 12128 / CDC 0568-73).